The following is a 302-amino-acid chain: MNLTTNGFQRNLPSSLGNMEMIEFLDISHNSFHGKLPRSFLKGCDSLIVLKLSHKKLSEEVFPEASNFFSILELSMDNNLFTGKIGRGLQSLRSLIMLDISNNNLSGVIPSWFDQLQDLHSLQISNNLLEGEVPISLFNMSSLQLLALSANSLSGDLPQAISGYGALKVLLLRDNNLSGVIPDTLLGKNIIVLDLRNNRLSGNIPEFINTQYIRILLLRGNNLTGSIPRRLCAVRSIHLLDLANNKLNGSIPSCLRNASLGLGRGGYIRRLFIIITFFLWEHLSVHFSNLCSCKMGLLSIMS.

LRR repeat units lie at residues 1–19 (MNLT…LGNM), 20–43 (EMIE…FLKG), and 45–70 (DSLI…NFFS). The LRR 4; degenerate repeat unit spans residues 72-91 (LELSMDNNLFTGKIGRGLQS). 7 LRR repeats span residues 92–115 (LRSL…WFDQ), 116–140 (LQDL…LFNM), 142–164 (SLQL…ISGY), 166–188 (ALKV…LLGK), 190–211 (IIVL…INTQ), 213–234 (IRIL…LCAV), and 235–258 (RSIH…LRNA).

It belongs to the RLP family.

The sequence is that of Putative receptor-like protein 16 from Arabidopsis thaliana (Mouse-ear cress).